The sequence spans 187 residues: Probable chorismate pyruvate-lyase (187 aa).

Substrate is bound by residues Arg81, Leu119, and Glu178.

This sequence belongs to the UbiC family.

It localises to the cytoplasm. The enzyme catalyses chorismate = 4-hydroxybenzoate + pyruvate. It functions in the pathway cofactor biosynthesis; ubiquinone biosynthesis. In terms of biological role, removes the pyruvyl group from chorismate, with concomitant aromatization of the ring, to provide 4-hydroxybenzoate (4HB) for the ubiquinone pathway. This chain is Probable chorismate pyruvate-lyase, found in Thiobacillus denitrificans (strain ATCC 25259 / T1).